Consider the following 170-residue polypeptide: Photosystem I assembly protein Ycf3 (170 aa).

TPR repeat units follow at residues 35–68, 72–105, and 120–153; these read AFTY…EIDP, SYIL…NPFL, and GEQA…TPGN.

This sequence belongs to the Ycf3 family.

It localises to the plastid. The protein resides in the chloroplast thylakoid membrane. Essential for the assembly of the photosystem I (PSI) complex. May act as a chaperone-like factor to guide the assembly of the PSI subunits. This is Photosystem I assembly protein Ycf3 from Oryza nivara (Indian wild rice).